Here is a 668-residue protein sequence, read N- to C-terminus: DNA ligase (668 aa).

Residues 37-41 (DAVYD), 86-87 (SM), and Glu116 contribute to the NAD(+) site. Lys118 serves as the catalytic N6-AMP-lysine intermediate. Residues Arg139, Glu173, Lys288, and Lys312 each coordinate NAD(+). Residues Cys406, Cys409, Cys424, and Cys429 each contribute to the Zn(2+) site. The region spanning 590-668 (APDNFFKEKT…EQEAIAKIEK (79 aa)) is the BRCT domain.

It belongs to the NAD-dependent DNA ligase family. LigA subfamily. Mg(2+) is required as a cofactor. The cofactor is Mn(2+).

The catalysed reaction is NAD(+) + (deoxyribonucleotide)n-3'-hydroxyl + 5'-phospho-(deoxyribonucleotide)m = (deoxyribonucleotide)n+m + AMP + beta-nicotinamide D-nucleotide.. Its function is as follows. DNA ligase that catalyzes the formation of phosphodiester linkages between 5'-phosphoryl and 3'-hydroxyl groups in double-stranded DNA using NAD as a coenzyme and as the energy source for the reaction. It is essential for DNA replication and repair of damaged DNA. The sequence is that of DNA ligase from Lactobacillus gasseri (strain ATCC 33323 / DSM 20243 / BCRC 14619 / CIP 102991 / JCM 1131 / KCTC 3163 / NCIMB 11718 / NCTC 13722 / AM63).